An 88-amino-acid polypeptide reads, in one-letter code: Sec-independent protein translocase protein TatA (88 aa).

The chain crosses the membrane as a helical span at residues 1 to 21 (MGSLSPWHWAILAVVVIVLFG). Over residues 43 to 52 (MREMQSETKA) the composition is skewed to basic and acidic residues. Positions 43-88 (MREMQSETKAEPSAIETNTANPTPVQSQRIDPAAATGQDQTEARPA) are disordered. A compositionally biased stretch (polar residues) spans 57-71 (IETNTANPTPVQSQR).

This sequence belongs to the TatA/E family. As to quaternary structure, the Tat system comprises two distinct complexes: a TatABC complex, containing multiple copies of TatA, TatB and TatC subunits, and a separate TatA complex, containing only TatA subunits. Substrates initially bind to the TatABC complex, which probably triggers association of the separate TatA complex to form the active translocon.

It localises to the cell membrane. Its function is as follows. Part of the twin-arginine translocation (Tat) system that transports large folded proteins containing a characteristic twin-arginine motif in their signal peptide across membranes. TatA could form the protein-conducting channel of the Tat system. The polypeptide is Sec-independent protein translocase protein TatA (Mycobacterium marinum (strain ATCC BAA-535 / M)).